A 159-amino-acid chain; its full sequence is Cytochrome c-type biogenesis protein CcmE (159 aa).

Residues 1–8 (MNPRRKTR) are Cytoplasmic-facing. The helical; Signal-anchor for type II membrane protein transmembrane segment at 9 to 29 (LWVALTVLAGLGLTMALVLYA) threads the bilayer. Residues 30 to 159 (LRANIDLFYT…PPQAYKDNRP (130 aa)) are Periplasmic-facing. 2 residues coordinate heme: H130 and Y134. The disordered stretch occupies residues 130–159 (HDENYTPPEVKAAMDANHTRPPQAYKDNRP).

The protein belongs to the CcmE/CycJ family.

The protein resides in the cell inner membrane. Heme chaperone required for the biogenesis of c-type cytochromes. Transiently binds heme delivered by CcmC and transfers the heme to apo-cytochromes in a process facilitated by CcmF and CcmH. This chain is Cytochrome c-type biogenesis protein CcmE, found in Cronobacter sakazakii (strain ATCC BAA-894) (Enterobacter sakazakii).